The sequence spans 396 residues: MTGFFTILSFSLAALSVTNAAQILSVPKGAEVVPNGYIVVMKDDTSQQDFSSHRVWISSIHHNMTRRGLDGAGVKQTYDFDHLRGYSGIFDEDTIKDISNDPKVAFVEPDAIISQHVVVQQRKAPWGLSRLSNRRGGRNYVFDSSAGSGVWAYVVDSGVDVRHAEFQGRAVWGSNLVDNKNSDGTGHGTHVAGTIAGKTYGIAKKAKVVAVKVLNSEGKGPTSGIIAGINWSIRHARKHGMLQKSVLNMSLGGTYSAGLNHATAQAIKAGMFVSVSAGNDNINSNGNSPASERSVCTIAASTENDGKASFSNWGPAVDLYAPGHNILSARPGGGSQTMSGTSMAAPHAAGVAAYLIAKEGIPGNRACLRLKQLSQPTIRNPGPDTTTRLLYNGSGR.

The first 20 residues, 1 to 20 (MTGFFTILSFSLAALSVTNA), serve as a signal peptide directing secretion. Residues 21 to 116 (AQILSVPKGA…VEPDAIISQH (96 aa)) constitute a propeptide that is removed on maturation. An Inhibitor I9 domain is found at 37 to 113 (YIVVMKDDTS…VAFVEPDAII (77 aa)). N63 carries N-linked (GlcNAc...) asparagine glycosylation. The 272-residue stretch at 125–396 (PWGLSRLSNR…TRLLYNGSGR (272 aa)) folds into the Peptidase S8 domain. Active-site charge relay system residues include D156 and H187. 2 N-linked (GlcNAc...) asparagine glycosylation sites follow: N230 and N248. The active-site Charge relay system is S342. A compositionally biased stretch (polar residues) spans 377–389 (TIRNPGPDTTTRL). The segment at 377-396 (TIRNPGPDTTTRLLYNGSGR) is disordered. N392 carries an N-linked (GlcNAc...) asparagine glycan.

This sequence belongs to the peptidase S8 family.

The protein localises to the secreted. In terms of biological role, secreted subtilisin-like serine protease with keratinolytic activity that contributes to pathogenicity. The protein is Subtilisin-like protease 5 (SUB5) of Arthroderma benhamiae (Trichophyton mentagrophytes).